Here is a 1375-residue protein sequence, read N- to C-terminus: DNA-directed RNA polymerase subunit beta (1375 aa).

The protein belongs to the RNA polymerase beta chain family. The RNAP catalytic core consists of 2 alpha, 1 beta, 1 beta' and 1 omega subunit. When a sigma factor is associated with the core the holoenzyme is formed, which can initiate transcription.

It carries out the reaction RNA(n) + a ribonucleoside 5'-triphosphate = RNA(n+1) + diphosphate. DNA-dependent RNA polymerase catalyzes the transcription of DNA into RNA using the four ribonucleoside triphosphates as substrates. The protein is DNA-directed RNA polymerase subunit beta of Campylobacter jejuni subsp. jejuni serotype O:6 (strain 81116 / NCTC 11828).